A 483-amino-acid chain; its full sequence is Aspartyl/glutamyl-tRNA(Asn/Gln) amidotransferase subunit B (483 aa).

The protein belongs to the GatB/GatE family. GatB subfamily. As to quaternary structure, heterotrimer of A, B and C subunits.

It catalyses the reaction L-glutamyl-tRNA(Gln) + L-glutamine + ATP + H2O = L-glutaminyl-tRNA(Gln) + L-glutamate + ADP + phosphate + H(+). The catalysed reaction is L-aspartyl-tRNA(Asn) + L-glutamine + ATP + H2O = L-asparaginyl-tRNA(Asn) + L-glutamate + ADP + phosphate + 2 H(+). Its function is as follows. Allows the formation of correctly charged Asn-tRNA(Asn) or Gln-tRNA(Gln) through the transamidation of misacylated Asp-tRNA(Asn) or Glu-tRNA(Gln) in organisms which lack either or both of asparaginyl-tRNA or glutaminyl-tRNA synthetases. The reaction takes place in the presence of glutamine and ATP through an activated phospho-Asp-tRNA(Asn) or phospho-Glu-tRNA(Gln). The polypeptide is Aspartyl/glutamyl-tRNA(Asn/Gln) amidotransferase subunit B (Marinobacter nauticus (strain ATCC 700491 / DSM 11845 / VT8) (Marinobacter aquaeolei)).